Consider the following 1412-residue polypeptide: Erbin (1412 aa).

LRR repeat units follow at residues 23–44 (TVTTLDYSHCSLEQVPKEIFTF), 47–68 (TLEELYLDANQIEELPKQLFNC), 70–91 (SLHKLSLPDNDLTTLPASIANL), 93–114 (NLRELDVSKNGIQEFPENIKNC), 116–137 (VLTIVEASVNPISKLPDGFSQL), 139–161 (NLTQLYLNDAFLEFLPANFGRLT), 162–183 (KLQILELRENQLKMLPKTMNRL), 185–206 (QLERLDLGSNEFTEVPEVLEQL), 208–229 (GLKEFWMDANRLTFIPGFIGSL), 231–252 (QLTYLDVSKNNIEMVEEGISTC), 254–275 (NLQDLLLSSNSLQQLPETIGSL), 277–298 (NITTLKIDENQLMYLPDSIGGL), 300–321 (SVEELDCSFNEVEALPSSIGQL), 323–344 (NLRTFAADHNYLQQLPPEIGSW), 346–367 (NITVLFLHSNKLETLPEEMGDM), 369–391 (KLKVINLSDNRLKNLPFSFTKLQ), and 392–413 (QLTAMWLSDNQSKPLIPLQKET). Phosphoserine occurs at positions 440 and 444. Disordered regions lie at residues 464–489 (CDEDKDEREAPPREGNLKRYPTPYPD) and 506–542 (KDEETNEDSGRDLKPHEDQQDINKDVGVKTSESTTTV). The span at 470-480 (EREAPPREGNL) shows a compositional bias: basic and acidic residues. Phosphotyrosine is present on Tyr-483. Thr-485 bears the Phosphothreonine mark. Residues 506–532 (KDEETNEDSGRDLKPHEDQQDINKDVG) show a composition bias toward basic and acidic residues. A compositionally biased stretch (low complexity) spans 533–542 (VKTSESTTTV). Residues Ser-569, Ser-598, Ser-602, Ser-603, and Ser-620 each carry the phosphoserine modification. The tract at residues 615–681 (PLIETSINQP…TDSSQDTSLC (67 aa)) is disordered. Residues 632 to 641 (NKKDDTKETD) are compositionally biased toward basic and acidic residues. Over residues 650–662 (NSNQNNSNCSSPS) the composition is skewed to low complexity. A compositionally biased stretch (polar residues) spans 663–681 (RMSDSVSLNTDSSQDTSLC). A Phosphoserine modification is found at Ser-715. The tract at residues 803–867 (ETEHLENGNK…PQKSGPVGSV (65 aa)) is disordered. The segment covering 817–835 (ESVNKVNGHSEETSQSPNR) has biased composition (polar residues). Ser-852, Ser-857, and Ser-872 each carry phosphoserine. Thr-917 is subject to Phosphothreonine. Tyr-920 is modified (phosphotyrosine). Ser-931 carries the post-translational modification Phosphoserine. The residue at position 972 (Tyr-972) is a Phosphotyrosine. Disordered regions lie at residues 997-1021 (NPQIDHASFPPQLLPRSESTENQSY) and 1075-1192 (QRQS…KSKV). Over residues 1075-1086 (QRQSSVSSTASV) the composition is skewed to polar residues. Tyr-1104 carries the phosphotyrosine modification. Residues 1157 to 1171 (MSVSDFNYSRTSPSK) show a composition bias toward polar residues. Phosphoserine occurs at positions 1158, 1179, and 1286. Residues 1321–1410 (EIRVRVEKDP…TVELIIVREV (90 aa)) form the PDZ domain.

It belongs to the LAP (LRR and PDZ) protein family. As to quaternary structure, interacts with ERBB2, BPAG1 and ITGB4. May favor the localization of ERBB2, by restricting its presence to the basolateral membrane of epithelial cells. Also found to interact with ARVCF and delta catenin. Interacts (via C-terminus) with DST Isoform 3 (via N-terminus). Interacts with NOD2 (via CARD domain). As to expression, highly expressed in brain, heart, kidney, muscle and stomach, followed by liver, spleen and intestine.

The protein localises to the cell junction. The protein resides in the hemidesmosome. Its subcellular location is the nucleus membrane. It is found in the basolateral cell membrane. Acts as an adapter for the receptor ERBB2, in epithelia. By binding the unphosphorylated 'Tyr-1248' of receptor ERBB2, it may contribute to stabilize this unphosphorylated state. Inhibits NOD2-dependent NF-kappa-B signaling and pro-inflammatory cytokine secretion. The chain is Erbin from Homo sapiens (Human).